A 221-amino-acid polypeptide reads, in one-letter code: UPF0758 protein HI_0952 (221 aa).

Positions 99-221 (IINDPETVKL…CYSFAENCLL (123 aa)) constitute an MPN domain. His-170, His-172, and Asp-183 together coordinate Zn(2+). Residues 170-183 (HNHPSGITEPSYSD) carry the JAMM motif motif.

Belongs to the UPF0758 family.

The sequence is that of UPF0758 protein HI_0952 from Haemophilus influenzae (strain ATCC 51907 / DSM 11121 / KW20 / Rd).